The sequence spans 413 residues: Histidine--tRNA ligase (413 aa).

It belongs to the class-II aminoacyl-tRNA synthetase family. In terms of assembly, homodimer.

The protein localises to the cytoplasm. It carries out the reaction tRNA(His) + L-histidine + ATP = L-histidyl-tRNA(His) + AMP + diphosphate + H(+). This Neorickettsia sennetsu (strain ATCC VR-367 / Miyayama) (Ehrlichia sennetsu) protein is Histidine--tRNA ligase.